We begin with the raw amino-acid sequence, 598 residues long: Protein VASCULAR ASSOCIATED DEATH 1, chloroplastic (598 aa).

Over residues 1-11 (MAMLSTASVSG) the composition is skewed to polar residues. A disordered region spans residues 1-64 (MAMLSTASVS…PSRGGDNQSE (64 aa)). A chloroplast-targeting transit peptide spans 1 to 68 (MAMLSTASVS…GDNQSEVISK (68 aa)). An N-linked (GlcNAc...) asparagine glycan is attached at asparagine 61. The 65-residue stretch at 70 to 134 (EEYRQLFRLP…PFAEISCVKR (65 aa)) folds into the GRAM domain. The VASt domain maps to 272–444 (DFTKVAEAKF…MAHELLKQKK (173 aa)). N-linked (GlcNAc...) asparagine glycosylation is found at asparagine 329 and asparagine 494. The chain crosses the membrane as a helical span at residues 507–527 (QVIVLAFAVILLMQVTIVVLL). A coiled-coil region spans residues 553–595 (WLEKRMHFLREEMMMVEDRLQRMRQDHAALKAQFHHLERLLRR).

It is found in the membrane. The protein localises to the plastid. It localises to the chloroplast. Functionally, involved in ethylene- and salicylic acid-dependent cell death control associated with cells in the vicinity of vascular bundles. The polypeptide is Protein VASCULAR ASSOCIATED DEATH 1, chloroplastic (Arabidopsis thaliana (Mouse-ear cress)).